The following is a 64-amino-acid chain: Large ribosomal subunit protein bL35 (64 aa).

This sequence belongs to the bacterial ribosomal protein bL35 family.

This Acinetobacter baylyi (strain ATCC 33305 / BD413 / ADP1) protein is Large ribosomal subunit protein bL35.